A 322-amino-acid chain; its full sequence is F-box protein At2g16300 (322 aa).

Residues 2 to 50 (ADWSLLPNDLLELIVGHLETSFEIVLFRSVCSSWRSVVPPQDQSRCLSI) form the F-box domain.

This chain is F-box protein At2g16300, found in Arabidopsis thaliana (Mouse-ear cress).